We begin with the raw amino-acid sequence, 420 residues long: Tyrosine--tRNA ligase (420 aa).

Tyrosine 33 contacts L-tyrosine. Residues 38 to 47 (PTGDSLHAGH) carry the 'HIGH' region motif. Positions 167 and 171 each coordinate L-tyrosine. Positions 227–231 (KFGKS) match the 'KMSKS' region motif. Lysine 230 contributes to the ATP binding site. The 67-residue stretch at 352-418 (PTIIDLLIGA…GKKNFAGVKY (67 aa)) folds into the S4 RNA-binding domain.

This sequence belongs to the class-I aminoacyl-tRNA synthetase family. TyrS type 1 subfamily. In terms of assembly, homodimer.

Its subcellular location is the cytoplasm. It catalyses the reaction tRNA(Tyr) + L-tyrosine + ATP = L-tyrosyl-tRNA(Tyr) + AMP + diphosphate + H(+). In terms of biological role, catalyzes the attachment of tyrosine to tRNA(Tyr) in a two-step reaction: tyrosine is first activated by ATP to form Tyr-AMP and then transferred to the acceptor end of tRNA(Tyr). The sequence is that of Tyrosine--tRNA ligase from Corynebacterium diphtheriae (strain ATCC 700971 / NCTC 13129 / Biotype gravis).